The following is a 180-amino-acid chain: D-glycero-beta-D-manno-heptose-1,7-bisphosphate 7-phosphatase (180 aa).

Aspartate 14 acts as the Nucleophile in catalysis. The Mg(2+) site is built by aspartate 14 and aspartate 16. Substrate contacts are provided by residues 14-16 (DRD), 22-25 (NDHY), and 56-59 (TNQS). Aspartate 16 acts as the Proton donor in catalysis. Positions 95, 97, 110, and 112 each coordinate Zn(2+). 113–114 (RK) is a substrate binding site. Aspartate 139 contacts Mg(2+).

It belongs to the gmhB family. Monomer. Requires Mg(2+) as cofactor.

The protein localises to the cytoplasm. The catalysed reaction is D-glycero-beta-D-manno-heptose 1,7-bisphosphate + H2O = D-glycero-beta-D-manno-heptose 1-phosphate + phosphate. Its pathway is nucleotide-sugar biosynthesis; ADP-L-glycero-beta-D-manno-heptose biosynthesis; ADP-L-glycero-beta-D-manno-heptose from D-glycero-beta-D-manno-heptose 7-phosphate: step 2/4. The protein operates within bacterial outer membrane biogenesis; LPS core biosynthesis. Converts the D-glycero-beta-D-manno-heptose 1,7-bisphosphate (beta-HBP) intermediate into D-glycero-beta-D-manno-heptose 1-phosphate by removing the phosphate group at the C-7 position. Also catalyzes the dephosphorylation of D-glycero-alpha-D-manno-heptose 1,7-bisphosphate in vitro. In Rhodopseudomonas palustris (strain ATCC BAA-98 / CGA009), this protein is D-glycero-beta-D-manno-heptose-1,7-bisphosphate 7-phosphatase.